We begin with the raw amino-acid sequence, 385 residues long: Methylthioribose-1-phosphate isomerase (385 aa).

D256 acts as the Proton donor in catalysis.

Belongs to the eIF-2B alpha/beta/delta subunits family. MtnA subfamily.

It is found in the cytoplasm. Its subcellular location is the nucleus. It catalyses the reaction 5-(methylsulfanyl)-alpha-D-ribose 1-phosphate = 5-(methylsulfanyl)-D-ribulose 1-phosphate. It participates in amino-acid biosynthesis; L-methionine biosynthesis via salvage pathway; L-methionine from S-methyl-5-thio-alpha-D-ribose 1-phosphate: step 1/6. Its function is as follows. Catalyzes the interconversion of methylthioribose-1-phosphate (MTR-1-P) into methylthioribulose-1-phosphate (MTRu-1-P). This is Methylthioribose-1-phosphate isomerase from Arthroderma otae (strain ATCC MYA-4605 / CBS 113480) (Microsporum canis).